The primary structure comprises 492 residues: Adenosylhomocysteinase (492 aa).

Thr68, Asp153, and Glu215 together coordinate substrate. 216-218 (TTT) provides a ligand contact to NAD(+). Lys245 and Asp249 together coordinate substrate. NAD(+) contacts are provided by residues Asn250, 279 to 284 (GYGDVG), Glu302, Asn337, 358 to 360 (IGH), and Asn406.

The protein belongs to the adenosylhomocysteinase family. NAD(+) is required as a cofactor.

It localises to the cytoplasm. The enzyme catalyses S-adenosyl-L-homocysteine + H2O = L-homocysteine + adenosine. The protein operates within amino-acid biosynthesis; L-homocysteine biosynthesis; L-homocysteine from S-adenosyl-L-homocysteine: step 1/1. In terms of biological role, may play a key role in the regulation of the intracellular concentration of adenosylhomocysteine. The chain is Adenosylhomocysteinase from Mycobacterium leprae (strain Br4923).